The sequence spans 230 residues: Ribulose-phosphate 3-epimerase (230 aa).

S10 contacts substrate. H35, D37, and H68 together coordinate a divalent metal cation. Catalysis depends on D37, which acts as the Proton acceptor. Residues H68, 146–149 (GFGG), 179–181 (DGG), and 201–202 (GS) contribute to the substrate site. A divalent metal cation is bound at residue D179. D179 functions as the Proton donor in the catalytic mechanism.

This sequence belongs to the ribulose-phosphate 3-epimerase family. In terms of assembly, homohexamer. Requires a divalent metal cation as cofactor.

It catalyses the reaction D-ribulose 5-phosphate = D-xylulose 5-phosphate. It participates in carbohydrate degradation. In terms of biological role, catalyzes the reversible epimerization of D-ribulose 5-phosphate to D-xylulose 5-phosphate. The protein is Ribulose-phosphate 3-epimerase of Synechocystis sp. (strain ATCC 27184 / PCC 6803 / Kazusa).